The following is a 592-amino-acid chain: Dictomallein-1 (592 aa).

The N-terminal stretch at 1-19 is a signal peptide; that stretch reads MKILIILLVFLNLITNINC. In terms of domain architecture, Peptidase M66 spans 140 to 402; the sequence is PNIGHETNLN…QNYFKDSIIY (263 aa). His294 provides a ligand contact to Zn(2+). The active site involves Glu295. His298 and His304 together coordinate Zn(2+).

This sequence belongs to the dictomallein family. Requires Zn(2+) as cofactor.

The protein resides in the secreted. This is Dictomallein-1 (dtmlA) from Dictyostelium discoideum (Social amoeba).